The sequence spans 448 residues: Probable glycine dehydrogenase (decarboxylating) subunit 1 (448 aa).

This sequence belongs to the GcvP family. N-terminal subunit subfamily. In terms of assembly, the glycine cleavage system is composed of four proteins: P, T, L and H. In this organism, the P 'protein' is a heterodimer of two subunits.

The catalysed reaction is N(6)-[(R)-lipoyl]-L-lysyl-[glycine-cleavage complex H protein] + glycine + H(+) = N(6)-[(R)-S(8)-aminomethyldihydrolipoyl]-L-lysyl-[glycine-cleavage complex H protein] + CO2. The glycine cleavage system catalyzes the degradation of glycine. The P protein binds the alpha-amino group of glycine through its pyridoxal phosphate cofactor; CO(2) is released and the remaining methylamine moiety is then transferred to the lipoamide cofactor of the H protein. The polypeptide is Probable glycine dehydrogenase (decarboxylating) subunit 1 (Parvibaculum lavamentivorans (strain DS-1 / DSM 13023 / NCIMB 13966)).